The primary structure comprises 150 residues: Putative pre-16S rRNA nuclease (150 aa).

The protein belongs to the YqgF nuclease family.

The protein localises to the cytoplasm. Its function is as follows. Could be a nuclease involved in processing of the 5'-end of pre-16S rRNA. This chain is Putative pre-16S rRNA nuclease, found in Syntrophus aciditrophicus (strain SB).